The sequence spans 1119 residues: DNA-directed RNA polymerase subunit beta (1119 aa).

It belongs to the RNA polymerase beta chain family. The RNAP catalytic core consists of 2 alpha, 1 beta, 1 beta' and 1 omega subunit. When a sigma factor is associated with the core the holoenzyme is formed, which can initiate transcription.

The catalysed reaction is RNA(n) + a ribonucleoside 5'-triphosphate = RNA(n+1) + diphosphate. Functionally, DNA-dependent RNA polymerase catalyzes the transcription of DNA into RNA using the four ribonucleoside triphosphates as substrates. The sequence is that of DNA-directed RNA polymerase subunit beta from Thermus thermophilus (strain ATCC 27634 / DSM 579 / HB8).